A 408-amino-acid polypeptide reads, in one-letter code: Na(+)-translocating NADH-quinone reductase subunit F (408 aa).

Residues isoleucine 6–alanine 26 form a helical membrane-spanning segment. In terms of domain architecture, 2Fe-2S ferredoxin-type spans glycine 35–valine 127. Residues cysteine 70, cysteine 76, cysteine 79, and cysteine 111 each contribute to the [2Fe-2S] cluster site. The 141-residue stretch at valine 130–lysine 270 folds into the FAD-binding FR-type domain.

This sequence belongs to the NqrF family. Composed of six subunits; NqrA, NqrB, NqrC, NqrD, NqrE and NqrF. [2Fe-2S] cluster serves as cofactor. It depends on FAD as a cofactor.

It is found in the cell inner membrane. It carries out the reaction a ubiquinone + n Na(+)(in) + NADH + H(+) = a ubiquinol + n Na(+)(out) + NAD(+). NQR complex catalyzes the reduction of ubiquinone-1 to ubiquinol by two successive reactions, coupled with the transport of Na(+) ions from the cytoplasm to the periplasm. The first step is catalyzed by NqrF, which accepts electrons from NADH and reduces ubiquinone-1 to ubisemiquinone by a one-electron transfer pathway. The polypeptide is Na(+)-translocating NADH-quinone reductase subunit F (Marinomonas sp. (strain MWYL1)).